The chain runs to 386 residues: Succinate--CoA ligase [ADP-forming] subunit beta (386 aa).

The 236-residue stretch at 9 to 244 (KELLREFGVA…TTEEDPREVE (236 aa)) folds into the ATP-grasp domain. Residues Lys-46, 53 to 55 (GRG), Glu-99, Ser-102, and Glu-107 contribute to the ATP site. Positions 199 and 213 each coordinate Mg(2+). Substrate-binding positions include Asn-264 and 321-323 (GIM).

The protein belongs to the succinate/malate CoA ligase beta subunit family. As to quaternary structure, heterotetramer of two alpha and two beta subunits. It depends on Mg(2+) as a cofactor.

It carries out the reaction succinate + ATP + CoA = succinyl-CoA + ADP + phosphate. The enzyme catalyses GTP + succinate + CoA = succinyl-CoA + GDP + phosphate. It participates in carbohydrate metabolism; tricarboxylic acid cycle; succinate from succinyl-CoA (ligase route): step 1/1. In terms of biological role, succinyl-CoA synthetase functions in the citric acid cycle (TCA), coupling the hydrolysis of succinyl-CoA to the synthesis of either ATP or GTP and thus represents the only step of substrate-level phosphorylation in the TCA. The beta subunit provides nucleotide specificity of the enzyme and binds the substrate succinate, while the binding sites for coenzyme A and phosphate are found in the alpha subunit. This chain is Succinate--CoA ligase [ADP-forming] subunit beta, found in Exiguobacterium sp. (strain ATCC BAA-1283 / AT1b).